The primary structure comprises 324 residues: MGMEGLLQNSTNFVLTGLITHPAFPGLLFAIVFSIFVVAITANLVMILLIHMDSRLHTPMYFLLSQLSIMDTIYICITVPKMLQDLLSKDKTISFLGCAVQIFLYLTLIGGEFFLLGLMAYDRYVAVCNPLRYPLLMNRRVCLFMVVGSWVGGSLDGFMLTPVTMSFPFCRSREINHFFCEIPAVLKLSCTDTSLYETLMYACCVLMLLIPLSVISVSYTHILLTVHRMNSAEGRRKAFATCSSHIMVVSVFYGAAFYTNVLPHSYHTPEKDKVVSAFYTILTPMLNPLIYSLRNKDVAAALRKVLGRCGSSQSIRVATVIRKG.

At Met1–Gly26 the chain is on the extracellular side. Asn9 carries an N-linked (GlcNAc...) asparagine glycan. A helical membrane pass occupies residues Leu27–Ile50. Residues His51 to Thr58 are Cytoplasmic-facing. Residues Pro59–Pro80 traverse the membrane as a helical segment. Residues Lys81–Gln101 are Extracellular-facing. Cysteines 98 and 190 form a disulfide. The chain crosses the membrane as a helical span at residues Ile102–Tyr121. Residues Asp122–Arg140 are Cytoplasmic-facing. A helical transmembrane segment spans residues Val141–Met159. Topologically, residues Leu160 to Tyr196 are extracellular. Residues Glu197–Thr220 form a helical membrane-spanning segment. Residues His221–Lys237 lie on the Cytoplasmic side of the membrane. A helical transmembrane segment spans residues Ala238–Asn260. The Extracellular segment spans residues Val261 to Lys273. Residues Val274–Leu293 form a helical membrane-spanning segment. Residues Arg294–Gly324 lie on the Cytoplasmic side of the membrane.

The protein belongs to the G-protein coupled receptor 1 family.

It is found in the cell membrane. Functionally, odorant receptor. The sequence is that of Olfactory receptor 2T2 (OR2T2) from Homo sapiens (Human).